The chain runs to 1032 residues: Protein transport protein Sec24D (1032 aa).

The disordered stretch occupies residues 1 to 260 (MSQQGYVATP…GPPQPQKKLD (260 aa)). Residues 102–133 (PSAQSSYPGPISTSSVTQLGSQLSAMQINSYG) are compositionally biased toward polar residues. Pro residues predominate over residues 198–212 (GPPPPNAQYQPPPLP). A Phosphoserine modification is found at S266. Zn(2+) contacts are provided by C363, C366, C385, and C388. Residues 363-388 (CNRCKAYMCPFMQFIEGGRRYQCGFC) form a zinc finger-like region. A Gelsolin-like repeat occupies 901–974 (MLPAAVRCSE…PYSQQLRMIM (74 aa)).

The protein belongs to the SEC23/SEC24 family. SEC24 subfamily. COPII is composed of at least five proteins: the Sec23/24 complex, the Sec13/31 complex and Sar1. Interacts with TMED2 and TMED10. Interacts with CNIH4. Interacts with GOSR2 (via IxM motif) and STX5 (via IxM motif); recruits GOSR2 and STX5 into COPII-coated vesicles. Interacts with KCNA3; this interaction is reduced in the presence of KCNE4. In terms of tissue distribution, ubiquitously expressed, with higher amounts in placenta, pancreas, heart and liver.

The protein localises to the cytoplasmic vesicle. Its subcellular location is the COPII-coated vesicle membrane. The protein resides in the endoplasmic reticulum membrane. It localises to the cytoplasm. It is found in the cytosol. Its function is as follows. Component of the coat protein complex II (COPII) which promotes the formation of transport vesicles from the endoplasmic reticulum (ER). The coat has two main functions, the physical deformation of the endoplasmic reticulum membrane into vesicles and the selection of cargo molecules for their transport to the Golgi complex. Plays a central role in cargo selection within the COPII complex and together with SEC24C may have a different specificity compared to SEC24A and SEC24B. May more specifically package GPI-anchored proteins through the cargo receptor TMED10. May also be specific for IxM motif-containing cargos like the SNAREs GOSR2 and STX5. The polypeptide is Protein transport protein Sec24D (Homo sapiens (Human)).